Reading from the N-terminus, the 267-residue chain is Ribosomal RNA small subunit methyltransferase A (267 aa).

6 residues coordinate S-adenosyl-L-methionine: N16, L18, G43, E64, D89, and N110.

The protein belongs to the class I-like SAM-binding methyltransferase superfamily. rRNA adenine N(6)-methyltransferase family. RsmA subfamily.

The protein localises to the cytoplasm. The enzyme catalyses adenosine(1518)/adenosine(1519) in 16S rRNA + 4 S-adenosyl-L-methionine = N(6)-dimethyladenosine(1518)/N(6)-dimethyladenosine(1519) in 16S rRNA + 4 S-adenosyl-L-homocysteine + 4 H(+). Specifically dimethylates two adjacent adenosines (A1518 and A1519) in the loop of a conserved hairpin near the 3'-end of 16S rRNA in the 30S particle. May play a critical role in biogenesis of 30S subunits. This Pseudomonas putida (strain ATCC 47054 / DSM 6125 / CFBP 8728 / NCIMB 11950 / KT2440) protein is Ribosomal RNA small subunit methyltransferase A.